The sequence spans 476 residues: Viral inhibitor of caspase-8-induced apoptosis (476 aa).

Belongs to the herpesviridae US22 family. In terms of assembly, interacts with host pro-caspase-8/CASP8; this interaction inhibits CASP8 activation.

Plays a role in the inhibition of apoptosis by interacting with the pro-domain of pro-caspase-8/CASP8 and thus preventing its activation. The sequence is that of Viral inhibitor of caspase-8-induced apoptosis (UL36) from Human cytomegalovirus (strain Merlin) (HHV-5).